We begin with the raw amino-acid sequence, 357 residues long: Nicotinate-nucleotide--dimethylbenzimidazole phosphoribosyltransferase (357 aa).

The Proton acceptor role is filled by E317.

It belongs to the CobT family.

The enzyme catalyses 5,6-dimethylbenzimidazole + nicotinate beta-D-ribonucleotide = alpha-ribazole 5'-phosphate + nicotinate + H(+). The protein operates within nucleoside biosynthesis; alpha-ribazole biosynthesis; alpha-ribazole from 5,6-dimethylbenzimidazole: step 1/2. In terms of biological role, catalyzes the synthesis of alpha-ribazole-5'-phosphate from nicotinate mononucleotide (NAMN) and 5,6-dimethylbenzimidazole (DMB). This Halalkalibacterium halodurans (strain ATCC BAA-125 / DSM 18197 / FERM 7344 / JCM 9153 / C-125) (Bacillus halodurans) protein is Nicotinate-nucleotide--dimethylbenzimidazole phosphoribosyltransferase.